The following is a 427-amino-acid chain: MSNNQILFERAQKTIPGGVNSPVRAFRSVGGTPRFVSRAQGPYFWDADGKQYIDYIGSWGPMIVGHVHPEVLSAVQKVLADGFSFGAPTEAEIEIAEEICKLVPSIEQVRMVSSGTEATMSALRLARGFTGRSRIVKFEGCYHGHADSLLVKAGSGLLTFGNPTSAGVPADIAKHTTVLEYNNVAALEEAFGAFGDEIAAVIVEPVAGNMNLVRGTPEFLNALRALCTKHGAVLIFDEVMCGFRVALGGAQQHYGITADLTCLGKVIGGGMPAAAFGGRRDIMAHLAPLGGVYQAGTLSGNPIAVAAGLKTLQLIQAPGFYDALTAQTKRLADGLAAEARAAGVPFAADSIGAMFGLYFAERVPTSFAEVTKSDTERFNRFFHLMLDEGVYFAPSAYEAGFVSSTHDDAVIDATLAAARRAFAALAA.

Lys265 carries the post-translational modification N6-(pyridoxal phosphate)lysine.

The protein belongs to the class-III pyridoxal-phosphate-dependent aminotransferase family. HemL subfamily. In terms of assembly, homodimer. Pyridoxal 5'-phosphate is required as a cofactor.

Its subcellular location is the cytoplasm. The catalysed reaction is (S)-4-amino-5-oxopentanoate = 5-aminolevulinate. The protein operates within porphyrin-containing compound metabolism; protoporphyrin-IX biosynthesis; 5-aminolevulinate from L-glutamyl-tRNA(Glu): step 2/2. In Burkholderia ambifaria (strain MC40-6), this protein is Glutamate-1-semialdehyde 2,1-aminomutase.